The chain runs to 250 residues: Small ribosomal subunit protein uS3 (250 aa).

The region spanning 39–111 (IRTLIKNHYP…KIQINIFEVK (73 aa)) is the KH type-2 domain.

It belongs to the universal ribosomal protein uS3 family. As to quaternary structure, part of the 30S ribosomal subunit. Forms a tight complex with proteins S10 and S14.

Binds the lower part of the 30S subunit head. Binds mRNA in the 70S ribosome, positioning it for translation. The chain is Small ribosomal subunit protein uS3 from Elm witches'-broom phytoplasma.